Here is a 104-residue protein sequence, read N- to C-terminus: Large ribosomal subunit protein bL21 (104 aa).

The protein belongs to the bacterial ribosomal protein bL21 family. In terms of assembly, part of the 50S ribosomal subunit. Contacts protein L20.

In terms of biological role, this protein binds to 23S rRNA in the presence of protein L20. The chain is Large ribosomal subunit protein bL21 from Allorhizobium ampelinum (strain ATCC BAA-846 / DSM 112012 / S4) (Agrobacterium vitis (strain S4)).